The primary structure comprises 1109 residues: Protein argonaute 3 (1109 aa).

Residues 1 to 13 (MAGRGGRDPRRGY) show a composition bias toward basic and acidic residues. Disordered stretches follow at residues 1 to 83 (MAGR…GLVR) and 125 to 220 (DHRD…PLSK). Composition is skewed to gly residues over residues 14–30 (DGGYGYPRGGGGQGGTN), 37–54 (RGGGRNGPRGGRFPGGRG), and 62–83 (DVLGGGQGGGRGTTAGAGGLVR). Over residues 125 to 134 (DHRDQHDHQS) the composition is skewed to basic and acidic residues. Residues 135 to 161 (QRHHHRHHHHQRQRHHHHHQRQQRRGS) are compositionally biased toward basic residues. Residues 411-521 (SVLDLVKTMK…VPIEFCNIPE (111 aa)) form the PAZ domain. Residues 527–545 (VARLDDKKSDNKGEQEKPS) are compositionally biased toward basic and acidic residues. A disordered region spans residues 527 to 548 (VARLDDKKSDNKGEQEKPSTKT). The 304-residue stretch at 720–1023 (LLFCPMLNRC…AAYRGRLYYE (304 aa)) folds into the Piwi domain.

It belongs to the argonaute family. Ago subfamily.

In terms of biological role, probably involved in the RNA silencing pathway. May bind to short RNAs such as microRNAs (miRNAs) or short interfering RNAs (siRNAs), and represses the translation of mRNAs which are complementary to them. This chain is Protein argonaute 3 (AGO3), found in Oryza sativa subsp. japonica (Rice).